A 258-amino-acid polypeptide reads, in one-letter code: Tryptophan synthase alpha chain (258 aa).

Active-site proton acceptor residues include Glu47 and Asp58.

It belongs to the TrpA family. Tetramer of two alpha and two beta chains.

The enzyme catalyses (1S,2R)-1-C-(indol-3-yl)glycerol 3-phosphate + L-serine = D-glyceraldehyde 3-phosphate + L-tryptophan + H2O. The protein operates within amino-acid biosynthesis; L-tryptophan biosynthesis; L-tryptophan from chorismate: step 5/5. Functionally, the alpha subunit is responsible for the aldol cleavage of indoleglycerol phosphate to indole and glyceraldehyde 3-phosphate. The protein is Tryptophan synthase alpha chain of Bacillus cereus (strain G9842).